The chain runs to 260 residues: 14-3-3-like protein (260 aa).

This sequence belongs to the 14-3-3 family.

This Pisum sativum (Garden pea) protein is 14-3-3-like protein.